A 585-amino-acid chain; its full sequence is Eukaryotic translation initiation factor 3 subunit D (585 aa).

Gly residues predominate over residues 110–130 (GGGTVFRGRGQRGVGQRGGRA). Positions 110–152 (GGGTVFRGRGQRGVGQRGGRAGFQRVGAGRGQGGDRYYDNRSA) are disordered. The segment at 300-314 (SIDLVTVNENAADAP) is RNA gate. The tract at residues 560-585 (VPPNTFEEDDEAAEEQEEKAEDESEE) is disordered. Over residues 565 to 585 (FEEDDEAAEEQEEKAEDESEE) the composition is skewed to acidic residues.

The protein belongs to the eIF-3 subunit D family. Component of the eukaryotic translation initiation factor 3 (eIF-3) complex.

It is found in the cytoplasm. MRNA cap-binding component of the eukaryotic translation initiation factor 3 (eIF-3) complex, which is involved in protein synthesis of a specialized repertoire of mRNAs and, together with other initiation factors, stimulates binding of mRNA and methionyl-tRNAi to the 40S ribosome. The eIF-3 complex specifically targets and initiates translation of a subset of mRNAs involved in cell proliferation. In the eIF-3 complex, eif3d specifically recognizes and binds the 7-methylguanosine cap of a subset of mRNAs. The chain is Eukaryotic translation initiation factor 3 subunit D from Aspergillus fumigatus (strain CBS 144.89 / FGSC A1163 / CEA10) (Neosartorya fumigata).